A 344-amino-acid chain; its full sequence is Ribosomal RNA large subunit methyltransferase Cfr (344 aa).

Residue E90 is the Proton acceptor of the active site. One can recognise a Radical SAM core domain in the interval K97–E330. The cysteines at positions 104 and 335 are disulfide-linked. [4Fe-4S] cluster contacts are provided by C111, C115, and C118. S-adenosyl-L-methionine-binding positions include G157 to E158, S188, S211 to H213, and N292. The active-site S-methylcysteine intermediate is C335.

Belongs to the radical SAM superfamily. RlmN family. Cfr subfamily. Requires [4Fe-4S] cluster as cofactor.

The protein localises to the cytoplasm. The enzyme catalyses adenosine(2503) in 23S rRNA + 2 reduced [2Fe-2S]-[ferredoxin] + 2 S-adenosyl-L-methionine = 8-methyladenosine(2503) in 23S rRNA + 5'-deoxyadenosine + L-methionine + 2 oxidized [2Fe-2S]-[ferredoxin] + S-adenosyl-L-homocysteine. Specifically methylates position 8 of adenine 2503 in 23S rRNA. Confers resistance to some classes of antibiotics. The polypeptide is Ribosomal RNA large subunit methyltransferase Cfr (Clostridium botulinum (strain Loch Maree / Type A3)).